The following is a 944-amino-acid chain: Isoleucine--tRNA ligase (944 aa).

Positions 58–68 (PYANGQIHIGH) match the 'HIGH' region motif. An L-isoleucyl-5'-AMP-binding site is contributed by Glu-568. A 'KMSKS' region motif is present at residues 609 to 613 (KMSKS). Position 612 (Lys-612) interacts with ATP. Zn(2+) is bound by residues Cys-907, Cys-910, Cys-927, and Cys-930.

Belongs to the class-I aminoacyl-tRNA synthetase family. IleS type 1 subfamily. In terms of assembly, monomer. Zn(2+) serves as cofactor.

It localises to the cytoplasm. The enzyme catalyses tRNA(Ile) + L-isoleucine + ATP = L-isoleucyl-tRNA(Ile) + AMP + diphosphate. Functionally, catalyzes the attachment of isoleucine to tRNA(Ile). As IleRS can inadvertently accommodate and process structurally similar amino acids such as valine, to avoid such errors it has two additional distinct tRNA(Ile)-dependent editing activities. One activity is designated as 'pretransfer' editing and involves the hydrolysis of activated Val-AMP. The other activity is designated 'posttransfer' editing and involves deacylation of mischarged Val-tRNA(Ile). The protein is Isoleucine--tRNA ligase of Idiomarina loihiensis (strain ATCC BAA-735 / DSM 15497 / L2-TR).